Consider the following 607-residue polypeptide: MCGIIGILGKRCVTSSLVESLKRLEYRGYDSSGIATVHNGRLYRIRAEGKLVHLEEKLQKTPLKGNLGIGHTRWATHGVAVERNAHPHVTERLAIVHNGIIENFVELQKELIEDGYTFETETDTEVIAHLITRALKSGLSPQEAIRTSWKRLQGAFAIVVIFEGEDNLMIAARSGPPLAIGYGKDEFFVGSDAIALAPFVDSISYMEDGDWAVLTREDITIYDVDNQPVKRPLTPLFEGALLASKGNHRHFMHKEMFEQPEVISHNLAHYLDLGNYTVRSFQKLIDWKKINRILFASCGTAYYSTLVARYWFESFAALSVDNDVASEFRYREPPINSDVLSVFVSQSGETADTLASLRYCREYGVKTATIVNVEQSTMAREADFVLPTRAGPEIGVASTKAFTCQLATLAAMALDAAKQRGFLAEQAEHQFVQQLAEVPRILNEVLKLDNKIEQICRNLVNVKGVLYLGRGTSYPIALEGALKLKELSYIHAEGYAAGELKHGPIALVDEAIPVIVVAPYDRWFEKTCSNMQEVAARNGRIILITDKKGAEAVHLDILSTIVLPNIPEFIAPIIYALPIQLIAYHTAVLLGTDVDQPRNLAKSVTVE.

The Nucleophile; for GATase activity role is filled by cysteine 2. Residues 2 to 217 (CGIIGILGKR…DGDWAVLTRE (216 aa)) enclose the Glutamine amidotransferase type-2 domain. SIS domains are found at residues 277-422 (TVRS…QRGF) and 455-597 (ICRN…VDQP). The active-site For Fru-6P isomerization activity is the lysine 602.

Homodimer.

Its subcellular location is the cytoplasm. The catalysed reaction is D-fructose 6-phosphate + L-glutamine = D-glucosamine 6-phosphate + L-glutamate. In terms of biological role, catalyzes the first step in hexosamine metabolism, converting fructose-6P into glucosamine-6P using glutamine as a nitrogen source. This is Glutamine--fructose-6-phosphate aminotransferase [isomerizing] from Bartonella henselae (strain ATCC 49882 / DSM 28221 / CCUG 30454 / Houston 1) (Rochalimaea henselae).